Reading from the N-terminus, the 84-residue chain is U4-theraphotoxin-Hhn1ac (84 aa).

A signal peptide spans Met-1–Ala-22. Residues Glu-23–Arg-47 constitute a propeptide that is removed on maturation. 3 cysteine pairs are disulfide-bonded: Cys-51–Cys-65, Cys-55–Cys-76, and Cys-70–Cys-81.

Belongs to the neurotoxin 12 (Hwtx-2) family. 02 (Hwtx-2) subfamily. In terms of tissue distribution, expressed by the venom gland.

The protein resides in the secreted. Postsynaptic neurotoxin. The chain is U4-theraphotoxin-Hhn1ac from Cyriopagopus hainanus (Chinese bird spider).